A 158-amino-acid polypeptide reads, in one-letter code: Transcription elongation factor GreA (158 aa).

It belongs to the GreA/GreB family.

Functionally, necessary for efficient RNA polymerase transcription elongation past template-encoded arresting sites. The arresting sites in DNA have the property of trapping a certain fraction of elongating RNA polymerases that pass through, resulting in locked ternary complexes. Cleavage of the nascent transcript by cleavage factors such as GreA or GreB allows the resumption of elongation from the new 3'terminus. GreA releases sequences of 2 to 3 nucleotides. This chain is Transcription elongation factor GreA, found in Ralstonia nicotianae (strain ATCC BAA-1114 / GMI1000) (Ralstonia solanacearum).